We begin with the raw amino-acid sequence, 307 residues long: tRNA pseudouridine synthase B (307 aa).

Aspartate 48 functions as the Nucleophile in the catalytic mechanism.

It belongs to the pseudouridine synthase TruB family. Type 1 subfamily.

It catalyses the reaction uridine(55) in tRNA = pseudouridine(55) in tRNA. Responsible for synthesis of pseudouridine from uracil-55 in the psi GC loop of transfer RNAs. This chain is tRNA pseudouridine synthase B, found in Neisseria meningitidis serogroup B (strain ATCC BAA-335 / MC58).